The sequence spans 179 residues: Nucleoside-triphosphatase THEP1 (179 aa).

ATP is bound by residues 7-14 (GMPGVGKT) and 98-105 (IIIIDEIG).

It belongs to the THEP1 NTPase family.

It carries out the reaction a ribonucleoside 5'-triphosphate + H2O = a ribonucleoside 5'-diphosphate + phosphate + H(+). In terms of biological role, has nucleotide phosphatase activity towards ATP, GTP, CTP, TTP and UTP. May hydrolyze nucleoside diphosphates with lower efficiency. The polypeptide is Nucleoside-triphosphatase THEP1 (Pyrococcus abyssi (strain GE5 / Orsay)).